Consider the following 416-residue polypeptide: Phosphoglycerate kinase (416 aa).

The (2R)-3-phosphoglycerate site is built by Val23, Asp24, Phe25, Asn26, Gln38, Arg39, Ser62, His63, Gly65, Arg66, Leu121, Arg122, His168, and Arg169. Residue Gly212 participates in ADP binding. Gly212 serves as a coordination point for CDP. Residues Ala213 and Lys214 each contribute to the AMP site. Ala213 contacts ATP. Ala213 serves as a coordination point for Mg(2+). Residues Ala216 and Asp217 each coordinate Mg(2+). Asp217 lines the CDP pocket. Residue Lys218 coordinates AMP. Lys218 provides a ligand contact to ATP. An ADP-binding site is contributed by Gly236. Residue Gly236 coordinates CDP. Gly237 and Gly311 together coordinate AMP. The ATP site is built by Gly237 and Gly311. CDP contacts are provided by Gly336 and Phe341. Phe341 serves as a coordination point for ADP. Glu342 is a binding site for AMP. Positions 342, 373, and 374 each coordinate ATP. Asp373 provides a ligand contact to Mg(2+).

It belongs to the phosphoglycerate kinase family. In terms of assembly, monomer. Requires Mg(2+) as cofactor.

It is found in the cytoplasm. It localises to the mitochondrion. The enzyme catalyses (2R)-3-phosphoglycerate + ATP = (2R)-3-phospho-glyceroyl phosphate + ADP. The protein operates within carbohydrate degradation; glycolysis; pyruvate from D-glyceraldehyde 3-phosphate: step 2/5. Catalyzes one of the two ATP producing reactions in the glycolytic pathway via the reversible conversion of 1,3-diphosphoglycerate to 3-phosphoglycerate. Both L- and D- forms of purine and pyrimidine nucleotides can be used as substrates, but the activity is much lower on pyrimidines. Negatively regulates the biosynthesis of acetyl-CoA from pyruvate in the mitochondrion. This Eremothecium gossypii (strain ATCC 10895 / CBS 109.51 / FGSC 9923 / NRRL Y-1056) (Yeast) protein is Phosphoglycerate kinase (PGK1).